Reading from the N-terminus, the 164-residue chain is MMSKNFRFSVRTFTNTTARLANYGKPQNPPIDPTLHMRISPIERTGETIDVKRARLVYQSRKRGILESDLLLSRFAKKYLKQMTMEELDEYDKLLDEADWDIYYWATKNYDTTPLPKKWEDSKILKLLQKEAENEERVILRMPELDEGDFINGGKETSLSEVKN.

It belongs to the SDHAF2 family. In terms of assembly, interacts with the flavoprotein subunit within the SDH catalytic dimer.

The protein localises to the mitochondrion matrix. Its function is as follows. Plays an essential role in the assembly of succinate dehydrogenase (SDH), an enzyme complex (also referred to as respiratory complex II) that is a component of both the tricarboxylic acid (TCA) cycle and the mitochondrial electron transport chain, and which couples the oxidation of succinate to fumarate with the reduction of ubiquinone (coenzyme Q) to ubiquinol. Required for flavinylation (covalent attachment of FAD) of the flavoprotein subunit of the SDH catalytic dimer. The protein is Succinate dehydrogenase assembly factor 2, mitochondrial of Lodderomyces elongisporus (strain ATCC 11503 / CBS 2605 / JCM 1781 / NBRC 1676 / NRRL YB-4239) (Yeast).